The chain runs to 196 residues: SPRY domain-containing protein 7 (196 aa).

At alanine 2 the chain carries N-acetylalanine. A B30.2/SPRY domain is found at alanine 2–proline 184.

The sequence is that of SPRY domain-containing protein 7 (SPRYD7) from Homo sapiens (Human).